Here is a 159-residue protein sequence, read N- to C-terminus: MEQDWQPGEEVTPGPEPCSKGQAPLYPIVHVTELKHTDPNFPSNSNAVGTSSGWNRIGTGCSHTWDWRFSCTQQALLPLLGAWEWSIDTEAGGGRREQSQKPCSNGGPAAAGEGRVLPSPCFPWSTCQAAIHKVCRWQGCTRPALLAPSLATLKEHSYP.

2 disordered regions span residues 1-23 and 91-110; these read MEQD…KGQA and AGGG…GPAA.

This is an uncharacterized protein from Homo sapiens (Human).